The primary structure comprises 270 residues: Acetylglutamate kinase (270 aa).

Substrate contacts are provided by residues 53–54 (GG), Arg-75, and Asn-167.

The protein belongs to the acetylglutamate kinase family. ArgB subfamily.

The protein localises to the cytoplasm. It catalyses the reaction N-acetyl-L-glutamate + ATP = N-acetyl-L-glutamyl 5-phosphate + ADP. It functions in the pathway amino-acid biosynthesis; L-arginine biosynthesis; N(2)-acetyl-L-ornithine from L-glutamate: step 2/4. Catalyzes the ATP-dependent phosphorylation of N-acetyl-L-glutamate. The sequence is that of Acetylglutamate kinase from Shewanella halifaxensis (strain HAW-EB4).